The primary structure comprises 248 residues: Granzyme C (248 aa).

The first 18 residues, 1 to 18, serve as a signal peptide directing secretion; the sequence is MPPVLILLTLLLPLRAGA. A propeptide spanning residues 19–20 is cleaved from the precursor; that stretch reads EE. A Peptidase S1 domain is found at 21-246; that stretch reads IIGGNEISPH…FVSWIKKTMK (226 aa). The cysteines at positions 50 and 66 are disulfide-linked. Residues His65 and Asp109 each act as charge relay system in the active site. 2 disulfide bridges follow: Cys143–Cys210 and Cys174–Cys189. Ser204 (charge relay system) is an active-site residue.

Belongs to the peptidase S1 family. Granzyme subfamily.

The protein resides in the cytolytic granule. In terms of biological role, this enzyme is probably necessary for target cell lysis in cell-mediated immune responses. In Mus musculus (Mouse), this protein is Granzyme C (Gzmc).